The following is a 397-amino-acid chain: tRNA-specific 2-thiouridylase MnmA (397 aa).

ATP contacts are provided by residues 19 to 26 (AMSGGVDS) and Leu45. The active-site Nucleophile is the Cys113. Cys113 and Cys210 are oxidised to a cystine. Gly137 lines the ATP pocket. Residues 160–162 (RDQ) are interaction with tRNA. Cys210 serves as the catalytic Cysteine persulfide intermediate.

The protein belongs to the MnmA/TRMU family.

It localises to the cytoplasm. The enzyme catalyses S-sulfanyl-L-cysteinyl-[protein] + uridine(34) in tRNA + AH2 + ATP = 2-thiouridine(34) in tRNA + L-cysteinyl-[protein] + A + AMP + diphosphate + H(+). Catalyzes the 2-thiolation of uridine at the wobble position (U34) of tRNA, leading to the formation of s(2)U34. The sequence is that of tRNA-specific 2-thiouridylase MnmA from Bradyrhizobium sp. (strain ORS 278).